A 594-amino-acid chain; its full sequence is APOBEC1 complementation factor (594 aa).

3 RRM domains span residues 56–134 (CEIF…ASVD), 136–218 (CRLF…WAEP), and 231–303 (KILY…LAKP). Residues 360–409 (HFPATKGHLSNRAIIRAPSVREIYMNVPVGAAGVRGLGGRGYLAYTGLGR) are required for nuclear localization. Threonine 499 carries the post-translational modification Phosphothreonine.

In terms of assembly, part of the apolipoprotein B mRNA editing complex with APOBEC1. Interacts with TNPO2; TNPO2 may be responsible for transport of A1CF into the nucleus. Interacts with SYNCRIP. Interacts with CELF2/CUGBP2. Interacts with RBM47. In terms of tissue distribution, widely expressed with highest levels in brain, liver, pancreas, colon and spleen.

It localises to the nucleus. The protein localises to the endoplasmic reticulum. Its subcellular location is the cytoplasm. Essential component of the apolipoprotein B mRNA editing enzyme complex which is responsible for the postranscriptional editing of a CAA codon for Gln to a UAA codon for stop in APOB mRNA. Binds to APOB mRNA and is probably responsible for docking the catalytic subunit, APOBEC1, to the mRNA to allow it to deaminate its target cytosine. The complex also protects the edited APOB mRNA from nonsense-mediated decay. This Homo sapiens (Human) protein is APOBEC1 complementation factor (A1CF).